The sequence spans 528 residues: MFSKYLQSRVCGLHSFTNSSAQQLFSKSIAHSSRRNFVISSSCTKFRNVAIQRNAKREFSRCAALKNFSYHARCFHATRAVWEMTDPYKTLGVSKSASASEIKSAYYKLAKQYHPDANPDKAAQDKFVEIKQAYEVLQDPKKKKAFDTYGAGAFKNGEFTGGDFEGFQNGFAGASSFSSGFPGFNFEDLFGFSSRGPQARRNTSFDVFVGEDIEASITIDFMEAVRGAKKDLSYSVSSTCSSCHGSGLQPGSHKSTCFACKGTGQRLHFIPPSFHMQTTCDSCGGTGTTIPPNSACRSCMGSGTVRERKTVSIDIPPGIDDNTVLRVMGAGNDASTAKGGPNAKSRPGDLFATIHVRKHPFFVREGTNVTYNAKIPMTTAALGGTLRVPTLTGNVDLRVSPGTSTGDRITMAGKGIRKVNTSRYGNFYVNFEVTIPKILSPHERSLLEQLADALNDSTARRTQSSPSGTNSSTSTSSTSSKHSTGISTEPTTGEENKQDGSVGGFFKRAFRRLHPDEDQNPKKDESSS.

Residues 1–66 (MFSKYLQSRV…REFSRCAALK (66 aa)) constitute a mitochondrion transit peptide. Positions 86 to 150 (DPYKTLGVSK…KKKKAFDTYG (65 aa)) constitute a J domain. The CR-type zinc finger occupies 227–308 (GAKKDLSYSV…CMGSGTVRER (82 aa)). CXXCXGXG motif repeat units lie at residues 240–247 (CSSCHGSG), 257–264 (CFACKGTG), 280–287 (CDSCGGTG), and 296–303 (CRSCMGSG). The tract at residues 455–528 (NDSTARRTQS…QNPKKDESSS (74 aa)) is disordered. The span at 462–488 (TQSSPSGTNSSTSTSSTSSKHSTGIST) shows a compositional bias: low complexity. Over residues 513–528 (LHPDEDQNPKKDESSS) the composition is skewed to basic and acidic residues.

Its subcellular location is the mitochondrion. In Schizosaccharomyces pombe (strain 972 / ATCC 24843) (Fission yeast), this protein is DnaJ homolog 1, mitochondrial (mdj1).